The following is a 383-amino-acid chain: uncharacterized protein (383 aa).

[4Fe-4S] cluster is bound by residues cysteine 12, cysteine 18, cysteine 21, and cysteine 88. The S-adenosyl-L-methionine site is built by glutamine 219, phenylalanine 246, glutamate 267, and aspartate 314. Cysteine 341 acts as the Nucleophile in catalysis.

This sequence belongs to the class I-like SAM-binding methyltransferase superfamily. RNA M5U methyltransferase family.

This is an uncharacterized protein from Protochlamydia amoebophila (strain UWE25).